A 308-amino-acid polypeptide reads, in one-letter code: Glutaminase (308 aa).

Residues Ser66, Asn117, Glu161, Asn168, Tyr192, Tyr244, and Val262 each coordinate substrate.

Belongs to the glutaminase family. As to quaternary structure, homotetramer.

The enzyme catalyses L-glutamine + H2O = L-glutamate + NH4(+). This Enterobacter sp. (strain 638) protein is Glutaminase.